A 97-amino-acid chain; its full sequence is MSEATVNDNAAVKNEKGARKVRSGYVVSTKMNKTIVVELEDRKQHALYGKIMRRNSRVKVHDENETAGVGDRVRIEETRPLSKDKHFRLTEVIEKAR.

Positions 1–20 (MSEATVNDNAAVKNEKGARK) are disordered.

It belongs to the universal ribosomal protein uS17 family. Part of the 30S ribosomal subunit.

Functionally, one of the primary rRNA binding proteins, it binds specifically to the 5'-end of 16S ribosomal RNA. The polypeptide is Small ribosomal subunit protein uS17 (Corynebacterium jeikeium (strain K411)).